The primary structure comprises 496 residues: Pyrrole-2-carboxylic acid decarboxylase (496 aa).

Trp166 contacts K(+). Prenylated FMN is bound by residues Val168, Arg170, Gln187, and His188. Residue His188 participates in Mn(2+) binding. Residues Ala218, Ala219, Met221, and Glu229 each contribute to the K(+) site. Glu229 contributes to the prenylated FMN binding site. Glu229 lines the Mn(2+) pocket. Glu278 acts as the Proton donor in catalysis. His386 is a binding site for prenylated FMN.

The protein belongs to the UbiD family. UbiD-like/FDC subfamily. Homodimer. It depends on prenylated FMN as a cofactor. Requires Mn(2+) as cofactor. K(+) is required as a cofactor.

It carries out the reaction pyrrole-2-carboxylate + H(+) = 1H-pyrrole + CO2. The catalysed reaction is pyrrole-2-carboxylate + H2O = 1H-pyrrole + hydrogencarbonate. Imidazole acts as a reversible inhibitor via the formation of an imidazole-prenyl-FMN adduct. Activity is light sensitive. In terms of biological role, catalyzes the prenyl-FMN-dependent decarboxylation of pyrrole-2-carboxylate (P2C). Can also catalyze the carboxylation of pyrrole in the presence of elevated concentrations of CO(2) or bicarbonate. Can accept a modest range of heteroaromatic compounds such as 3-methylpyrrole-2-carboxylate, indole-3-carboxylate and furan-2-carboxylate, and shows very low activity with thiophene-2-carboxylate. Attenuates the virulence of P.aeruginosa in a Drosophila model when overexpressed. The sequence is that of Pyrrole-2-carboxylic acid decarboxylase from Pseudomonas aeruginosa (strain ATCC 15692 / DSM 22644 / CIP 104116 / JCM 14847 / LMG 12228 / 1C / PRS 101 / PAO1).